We begin with the raw amino-acid sequence, 844 residues long: MAPTFQTALFFTIISLSFAAPNAKQVRWCAISDLEQKKCNDLVGSCNVPDITLVCVLRSSTEDCMTAIKDGQADAMFLDSGEVYEASKDPYNLKPIIAEPYSSNRDLQKCLKERQQALAKKMIGHYIPQCDEKGNYQPQQCHGSTGHCWCVNAMGEKISGTNTPPGQTRATCERHELPKCLKERQVALGGDEKVLGRFVPQCDEKGNYEPQQFHGSTGYSWCVNAIGEEIAGTKTPPGKIPATCQKHDLVTTCHYAVAMVKKSSAFQFNQLKGKRSCHSGVSKTDGWKALVTVLVEKKLLSWDGPAKESIQRAMSKFFSVSCIPGATQTNLCKQCKGEEGKNCKNSHDEPYYGNYGAFRCLKEDMGDVAFLRSTALSDEHSEVYELLCPDNTRKPLNKYKECNLGTVPAGTVVTRKISDKTEDINNFLMEAQKRQCKLFSSAHGKDLMFDDSTLQLALLSSEVDAFLYLGVKLFHAMKALTGDAHLPSKNKVRWCTINKLEKMKCDDWSAVSGGAIACTEASCPKGCVKQILKGEADAVKLEVQYMYEALMCGLLPAVEEYHNKDDFGPCKTPGSPYTDFGTLRAVALVKKSNKDINWNNIKGKKSCHTGVGDIAGWVIPVSLIRRQNDNSDIDSFFGESCAPGSDTKSNLCKLCIGDPKNSAANTKCSLSDKEAYYGNQGAFRCLVEKGDVAFVPHTVVFENTDGKNPAVWAKNLKSEDFELLCLDGSRAPVSNYKSCKLSGIPPPAIVTREESISDVVRIVANQQSLYGRKGFEKDMFQLFSSNKGNNLLFNDNTQCLITFDRQPKDIMEDYFGKPYYTTVYGASRSAMSSELISACTIKHC.

Positions 1–19 (MAPTFQTALFFTIISLSFA) are cleaved as a signal peptide. Positions 26-106 (VRWCAISDLE…IAEPYSSNRD (81 aa)) constitute a Transferrin-like 1; first part domain. 19 disulfides stabilise this stretch: Cys29–Cys64, Cys39–Cys55, Cys110–Cys130, Cys141–Cys148, Cys150–Cys172, Cys180–Cys202, Cys222–Cys244, Cys277–Cys360, Cys322–Cys335, Cys332–Cys343, Cys388–Cys402, Cys495–Cys527, Cys505–Cys518, Cys552–Cys839, Cys570–Cys799, Cys607–Cys685, Cys641–Cys655, Cys652–Cys668, and Cys725–Cys739. 2 Thyroglobulin type-1 domains span residues 107–172 (LQKC…RATC) and 177–244 (LPKC…PATC). Residues 109–249 (KCLKERQQAL…IPATCQKHDL (141 aa)) are absent in transferrins. Residues 245–482 (QKHDLVTTCH…LFHAMKALTG (238 aa)) enclose the Transferrin-like 1; second part domain. The Transferrin-like 2 domain maps to 492-828 (VRWCTINKLE…YYTTVYGASR (337 aa)).

Belongs to the transferrin family. Monomer. Plasma. Highest levels of transcripts found in the liver, the lung, the pancreas and the brain.

The protein localises to the secreted. Its function is as follows. Binds specifically to the neurotoxin saxitoxin. Its physiological role may be to transport or sequester an endogenous organic molecule other than Fe(3+). It may participate in a detoxification mechanism for neutralizing a microbial toxin. The polypeptide is Saxiphilin (Aquarana catesbeiana (American bullfrog)).